The following is a 411-amino-acid chain: MTSATDKSIDRLVVNAKTRRRNSSVGKIDLGDTVPGFAAMPESAASKNEAKKRMKALTGDSKKDSDLLWKVWFSYREMNYRHSWLTPFFILVCVYSAYFLSGNRTESNPLHMFVAISYQVDGTDSYAKGIKDLSFVFFYMIFFTFLREFLMDVVIRPFTVYLNVTSEHRQKRMLEQMYAIFYCGVSGPFGLYIMYHSDLWLFKTKPMYRTYPDITNPFLFKIFYLGQAAFWAQQACVLVLQLEKPRKDYKELVFHHIVTLLLIWSSYVFHFTKMGLAIYITMDVSDFFLSLSKTLNYLNSVFTPFVFGLFVFFWIYLRHVVNIRILWSVLTEFRHEGNYVLNFATQQYKCWISLPIVFVLIAALQLVNLYWLFLILRILYRLIWQGIQKDERSDSDSDESAENEESKEKCE.

The Cytoplasmic portion of the chain corresponds to 1-81; it reads MTSATDKSID…WFSYREMNYR (81 aa). A phosphoserine mark is found at Ser23 and Ser24. Residues 82–102 traverse the membrane as a helical segment; sequence HSWLTPFFILVCVYSAYFLSG. Asn103 carries an N-linked (GlcNAc...) asparagine glycan. Residues 103-134 are Lumenal-facing; it reads NRTESNPLHMFVAISYQVDGTDSYAKGIKDLS. The chain crosses the membrane as a helical span at residues 135–155; it reads FVFFYMIFFTFLREFLMDVVI. At 156–176 the chain is on the cytoplasmic side; it reads RPFTVYLNVTSEHRQKRMLEQ. Positions 168-384 constitute a TLC domain; it reads HRQKRMLEQM…ILRILYRLIW (217 aa). A helical membrane pass occupies residues 177–197; the sequence is MYAIFYCGVSGPFGLYIMYHS. Topologically, residues 198–211 are lumenal; sequence DLWLFKTKPMYRTY. The helical transmembrane segment at 212–232 threads the bilayer; it reads PDITNPFLFKIFYLGQAAFWA. Over 233–251 the chain is Cytoplasmic; it reads QQACVLVLQLEKPRKDYKE. A helical membrane pass occupies residues 252–272; the sequence is LVFHHIVTLLLIWSSYVFHFT. The Lumenal segment spans residues 273-296; that stretch reads KMGLAIYITMDVSDFFLSLSKTLN. The chain crosses the membrane as a helical span at residues 297–317; the sequence is YLNSVFTPFVFGLFVFFWIYL. At 318–355 the chain is on the cytoplasmic side; it reads RHVVNIRILWSVLTEFRHEGNYVLNFATQQYKCWISLP. The helical transmembrane segment at 356-376 threads the bilayer; that stretch reads IVFVLIAALQLVNLYWLFLIL. The Lumenal segment spans residues 377 to 411; sequence RILYRLIWQGIQKDERSDSDSDESAENEESKEKCE. The interval 390 to 411 is disordered; it reads DERSDSDSDESAENEESKEKCE.

Belongs to the sphingosine N-acyltransferase family.

The protein localises to the endoplasmic reticulum membrane. The enzyme catalyses a fatty acyl-CoA + sphing-4-enine = an N-acylsphing-4-enine + CoA + H(+). Its function is as follows. Component of the ceramide synthase complex required for C26-CoA-dependent ceramide synthesis. Redundant to LAC1. Facilitates ER-to-Golgi transport of GPI-anchored proteins. Involved in the aging process. The polypeptide is Sphingosine N-acyltransferase LAG1 (LAG1) (Saccharomyces cerevisiae (strain YJM789) (Baker's yeast)).